The sequence spans 477 residues: Aspartyl/glutamyl-tRNA(Asn/Gln) amidotransferase subunit B (477 aa).

The protein belongs to the GatB/GatE family. GatB subfamily. Heterotrimer of A, B and C subunits.

It catalyses the reaction L-glutamyl-tRNA(Gln) + L-glutamine + ATP + H2O = L-glutaminyl-tRNA(Gln) + L-glutamate + ADP + phosphate + H(+). The catalysed reaction is L-aspartyl-tRNA(Asn) + L-glutamine + ATP + H2O = L-asparaginyl-tRNA(Asn) + L-glutamate + ADP + phosphate + 2 H(+). In terms of biological role, allows the formation of correctly charged Asn-tRNA(Asn) or Gln-tRNA(Gln) through the transamidation of misacylated Asp-tRNA(Asn) or Glu-tRNA(Gln) in organisms which lack either or both of asparaginyl-tRNA or glutaminyl-tRNA synthetases. The reaction takes place in the presence of glutamine and ATP through an activated phospho-Asp-tRNA(Asn) or phospho-Glu-tRNA(Gln). This Thioalkalivibrio sulfidiphilus (strain HL-EbGR7) protein is Aspartyl/glutamyl-tRNA(Asn/Gln) amidotransferase subunit B.